The sequence spans 159 residues: Na(+)/H(+) antiporter subunit E1 (159 aa).

The next 4 membrane-spanning stretches (helical) occupy residues 1–21, 27–47, 49–69, and 101–121; these read MAVQ…VTNS, FVLG…VLPG, FYVI…IELI, and WQIV…VLGV.

Belongs to the CPA3 antiporters (TC 2.A.63) subunit E family. In terms of assembly, may form a heterooligomeric complex that consists of seven subunits: mnhA1, mnhB1, mnhC1, mnhD1, mnhE1, mnhF1 and mnhG1.

Its subcellular location is the cell membrane. Its function is as follows. Mnh complex is a Na(+)/H(+) antiporter involved in Na(+) excretion. This is Na(+)/H(+) antiporter subunit E1 (mnhE1) from Staphylococcus aureus (strain Mu3 / ATCC 700698).